A 1108-amino-acid chain; its full sequence is AP-3 complex subunit beta (1108 aa).

4 HEAT repeats span residues 90–127 (DSAL…IDII), 327–363 (IEAQ…LRPS), 397–433 (ENIG…STVP), and 434–471 (DVTE…LNAT). Basic and acidic residues predominate over residues 480-490 (KEKEKEKDVKE). Disordered regions lie at residues 480 to 501 (KEKE…HSSS), 736 to 797 (DEEE…YDGE), and 811 to 835 (LFGI…GEEE). Composition is skewed to acidic residues over residues 736–764 (DEEE…EDFF) and 780–797 (YDED…YDGE).

This sequence belongs to the adaptor complexes large subunit family. In terms of assembly, adaptor protein complex 3 (AP-3) is a heterotetramer composed of two large adaptins (delta-type subunit and beta-type subunit), a medium adaptin (mu-type subunit) and a small adaptin (sigma-type subunit).

Its subcellular location is the endosome membrane. In terms of biological role, part of the AP-3 complex, an adaptor-related complex which is essential for the compartmentalization of the endocytic pathway. In Dictyostelium discoideum (Social amoeba), this protein is AP-3 complex subunit beta (ap3b-1).